Here is a 34-residue protein sequence, read N- to C-terminus: Photosystem I reaction center subunit XII (34 aa).

The helical transmembrane segment at 10-32 (VFVALVVAAHAAVLALRLSISLY) threads the bilayer.

It belongs to the PsaM family.

It localises to the cellular thylakoid membrane. The polypeptide is Photosystem I reaction center subunit XII (Parasynechococcus marenigrum (strain WH8102)).